The following is a 362-amino-acid chain: UDP-N-acetylglucosamine--N-acetylmuramyl-(pentapeptide) pyrophosphoryl-undecaprenol N-acetylglucosamine transferase (362 aa).

UDP-N-acetyl-alpha-D-glucosamine-binding positions include 14 to 16, asparagine 122, arginine 163, serine 190, and glutamine 285; that span reads TGG.

This sequence belongs to the glycosyltransferase 28 family. MurG subfamily.

It localises to the cell inner membrane. The enzyme catalyses di-trans,octa-cis-undecaprenyl diphospho-N-acetyl-alpha-D-muramoyl-L-alanyl-D-glutamyl-meso-2,6-diaminopimeloyl-D-alanyl-D-alanine + UDP-N-acetyl-alpha-D-glucosamine = di-trans,octa-cis-undecaprenyl diphospho-[N-acetyl-alpha-D-glucosaminyl-(1-&gt;4)]-N-acetyl-alpha-D-muramoyl-L-alanyl-D-glutamyl-meso-2,6-diaminopimeloyl-D-alanyl-D-alanine + UDP + H(+). The protein operates within cell wall biogenesis; peptidoglycan biosynthesis. In terms of biological role, cell wall formation. Catalyzes the transfer of a GlcNAc subunit on undecaprenyl-pyrophosphoryl-MurNAc-pentapeptide (lipid intermediate I) to form undecaprenyl-pyrophosphoryl-MurNAc-(pentapeptide)GlcNAc (lipid intermediate II). In Prochlorococcus marinus (strain MIT 9215), this protein is UDP-N-acetylglucosamine--N-acetylmuramyl-(pentapeptide) pyrophosphoryl-undecaprenol N-acetylglucosamine transferase.